A 132-amino-acid polypeptide reads, in one-letter code: Small ribosomal subunit protein eS6 (132 aa).

It belongs to the eukaryotic ribosomal protein eS6 family.

In Methanosphaerula palustris (strain ATCC BAA-1556 / DSM 19958 / E1-9c), this protein is Small ribosomal subunit protein eS6.